We begin with the raw amino-acid sequence, 318 residues long: Beta-galactosidase small subunit (318 aa).

The protein belongs to the bacterial beta-galactosidase small subunit family. As to quaternary structure, heterodimer of a large (LacL) and a small subunit (LacM).

The enzyme catalyses Hydrolysis of terminal non-reducing beta-D-galactose residues in beta-D-galactosides.. In terms of biological role, component of a beta-galactosidase. The chain is Beta-galactosidase small subunit from Lactobacillus helveticus (Lactobacillus suntoryeus).